A 340-amino-acid chain; its full sequence is Nesprin-4 (340 aa).

2 disordered regions span residues 1–86 (MAQF…DGGK) and 254–277 (HRRRLQKPQDKKRQGPPSLPDAML). Residues 1–291 (MAQFPLLGHG…GVPAPASRRP (291 aa)) lie on the Cytoplasmic side of the membrane. The segment covering 53–63 (APEHFMDEPKS) has biased composition (basic and acidic residues). Residues 283-340 (VPAPASRRPLTFLLLLLFLLLVGATLLLPLSGVPCCSHTRLARTPYLVLSYVNGLPPI) enclose the KASH domain. Residues 292 to 312 (LTFLLLLLFLLLVGATLLLPL) traverse the membrane as a helical; Anchor for type IV membrane protein segment. The Perinuclear space segment spans residues 313–340 (SGVPCCSHTRLARTPYLVLSYVNGLPPI).

Belongs to the nesprin family. As to quaternary structure, core component of LINC complexes which are composed of inner nuclear membrane SUN domain-containing proteins coupled to outer nuclear membrane KASH domain-containing nesprins. SUN and KASH domain-containing proteins seem to bind each other promiscuously; however, differentially expression of LINC complex constituents can give rise to specific assemblies. Probably part of a SUN1-containing LINC complex. Interacts with kinesins KIF5B and KLC1.

The protein resides in the nucleus outer membrane. Its function is as follows. As a component of the LINC (LInker of Nucleoskeleton and Cytoskeleton) complex, involved in the connection between the nuclear lamina and the cytoskeleton. The nucleocytoplasmic interactions established by the LINC complex play an important role in the transmission of mechanical forces across the nuclear envelope and in nuclear movement and positioning. Behaves as a kinesin cargo, providing a functional binding site for kinesin-1 at the nuclear envelope. Hence may contribute to the establishment of secretory epithelial morphology, by promoting kinesin-dependent apical migration of the centrosome and Golgi apparatus and basal localization of the nucleus. This chain is Nesprin-4 (Syne4), found in Rattus norvegicus (Rat).